Consider the following 226-residue polypeptide: Leucyl/phenylalanyl-tRNA--protein transferase (226 aa).

It belongs to the L/F-transferase family.

Its subcellular location is the cytoplasm. The enzyme catalyses N-terminal L-lysyl-[protein] + L-leucyl-tRNA(Leu) = N-terminal L-leucyl-L-lysyl-[protein] + tRNA(Leu) + H(+). It catalyses the reaction N-terminal L-arginyl-[protein] + L-leucyl-tRNA(Leu) = N-terminal L-leucyl-L-arginyl-[protein] + tRNA(Leu) + H(+). It carries out the reaction L-phenylalanyl-tRNA(Phe) + an N-terminal L-alpha-aminoacyl-[protein] = an N-terminal L-phenylalanyl-L-alpha-aminoacyl-[protein] + tRNA(Phe). In terms of biological role, functions in the N-end rule pathway of protein degradation where it conjugates Leu, Phe and, less efficiently, Met from aminoacyl-tRNAs to the N-termini of proteins containing an N-terminal arginine or lysine. This is Leucyl/phenylalanyl-tRNA--protein transferase from Pseudomonas aeruginosa (strain LESB58).